The following is a 158-amino-acid chain: Large ribosomal subunit protein uL16 (158 aa).

Belongs to the universal ribosomal protein uL16 family. In terms of assembly, part of the 50S ribosomal subunit.

Its function is as follows. Binds 23S rRNA and is also seen to make contacts with the A and possibly P site tRNAs. This Prochlorococcus marinus (strain MIT 9303) protein is Large ribosomal subunit protein uL16.